A 331-amino-acid polypeptide reads, in one-letter code: Nucleotide sugar transporter SLC35B4 (331 aa).

11 consecutive transmembrane segments (helical) span residues 4–24, 30–50, 59–79, 92–112, 117–137, 153–173, 201–221, 229–249, 251–267, 268–288, and 291–311; these read ALAVGLVFAGCCSNVIFLELL, GCGNIVTFAQFLFIAVEGFLF, PAIPIRYYAIMVTMFFTVSVV, LHMIFRSGSLIANMILGIIIL, SIFKYTSIALVSVGIFICTFM, GFQAFVWWLLGIGALTFALLM, ALPLPGFVFLASDIYDHAVLF, IPVIGVTLPIMWFYLLMNIIT, YVCIRGVFILTTECASL, TVTLVVTLRKFVSLIFSILYF, and PFTLWHWLGTLFVFIGTLMYT. The short motif at 326–331 is the Mediates endoplasmic reticulum retention element; the sequence is KDSKKN.

It belongs to the nucleotide-sugar transporter family. SLC35B subfamily.

Its subcellular location is the endoplasmic reticulum membrane. The catalysed reaction is UDP-N-acetyl-alpha-D-glucosamine(in) + UDP-alpha-D-glucuronate(out) = UDP-N-acetyl-alpha-D-glucosamine(out) + UDP-alpha-D-glucuronate(in). The enzyme catalyses UDP-alpha-D-xylose(in) + UDP-alpha-D-glucuronate(out) = UDP-alpha-D-xylose(out) + UDP-alpha-D-glucuronate(in). Its function is as follows. Antiporter that transports nucleotide sugars across the endoplasmic reticulum (ER) membrane in exchange for another nucleotide sugar. May couple UDP-alpha-D-glucuronate (UDP-GlcA) or UDP-alpha-D-xylose (UDP-Xyl) efflux to UDP-alpha-D-glucuronate (UDP-GlcA) influx into the ER lumen, which in turn stimulates glucuronidation and excretion of endobiotics and xenobiotics. This is Nucleotide sugar transporter SLC35B4 (SLC35B4) from Pongo abelii (Sumatran orangutan).